The chain runs to 204 residues: tRNA (pseudouridine(54)-N(1))-methyltransferase (204 aa).

Leu-136 and Gly-158 together coordinate S-adenosyl-L-methionine.

The protein belongs to the methyltransferase superfamily. TrmY family. Homodimer.

The protein localises to the cytoplasm. The catalysed reaction is pseudouridine(54) in tRNA + S-adenosyl-L-methionine = N(1)-methylpseudouridine(54) in tRNA + S-adenosyl-L-homocysteine + H(+). Functionally, specifically catalyzes the N1-methylation of pseudouridine at position 54 (Psi54) in tRNAs. The chain is tRNA (pseudouridine(54)-N(1))-methyltransferase from Pyrococcus abyssi (strain GE5 / Orsay).